The sequence spans 3165 residues: Protein eyes shut homolog (3165 aa).

The first 21 residues, 1 to 21, serve as a signal peptide directing secretion; the sequence is MTDKSIVILSLMVFHSSFING. Asn166 carries N-linked (GlcNAc...) asparagine glycosylation. 3 consecutive EGF-like domains span residues 170–212, 213–254, and 256–292; these read KQQF…KYCQ, ELDA…KNCS, and IIGQ…PFCE. 9 cysteine pairs are disulfide-bonded: Cys174–Cys189, Cys183–Cys200, Cys202–Cys211, Cys217–Cys228, Cys222–Cys242, Cys244–Cys253, Cys260–Cys270, Cys265–Cys280, and Cys282–Cys291. Asn269 and Asn272 each carry an N-linked (GlcNAc...) asparagine glycan. N-linked (GlcNAc...) asparagine glycans are attached at residues Asn311 and Asn343. 2 EGF-like domains span residues 332-368 and 370-406; these read DVSE…LLCK and IQTS…KNCE. Cystine bridges form between Cys341/Cys356, Cys358/Cys367, Cys374/Cys385, and Cys396/Cys405. Asn506 and Asn566 each carry an N-linked (GlcNAc...) asparagine glycan. EGF-like domains follow at residues 567–602 and 643–679; these read TTDD…RLCV and DTED…TQCE. 46 disulfides stabilise this stretch: Cys575–Cys590, Cys592–Cys601, Cys669–Cys678, Cys685–Cys696, Cys690–Cys705, Cys707–Cys719, Cys737–Cys748, Cys742–Cys757, Cys759–Cys768, Cys775–Cys786, Cys780–Cys795, Cys797–Cys806, Cys813–Cys824, Cys818–Cys835, Cys837–Cys846, Cys853–Cys866, Cys860–Cys876, Cys878–Cys887, Cys894–Cys905, Cys899–Cys914, Cys916–Cys925, Cys932–Cys943, Cys937–Cys952, Cys954–Cys963, Cys970–Cys981, Cys975–Cys990, Cys992–Cys1001, Cys1008–Cys1019, Cys1013–Cys1028, Cys1030–Cys1039, Cys1046–Cys1056, Cys1051–Cys1065, Cys1067–Cys1076, Cys1083–Cys1094, Cys1088–Cys1103, Cys1105–Cys1114, Cys1121–Cys1137, Cys1131–Cys1147, Cys1149–Cys1158, Cys1165–Cys1176, Cys1170–Cys1185, Cys1187–Cys1196, Cys2037–Cys2063, Cys2103–Cys2114, Cys2108–Cys2128, and Cys2130–Cys2139. The EGF-like 8; calcium-binding domain occupies 681–720; the sequence is DIDECASHPCKNGATCIDQPGNYFCQCVPPFKVVDGFSCL. The region spanning 733 to 769 is the EGF-like 9; calcium-binding domain; that stretch reads DIDDCILNACEHNSTCKDLHLSYQCVCLSDWEGNFCE. Positions 771–807 constitute an EGF-like 10; calcium-binding domain; the sequence is ESNECKMNPCKNNSTCTDLYKSYRCECTSGWTGQNCS. 3 EGF-like domains span residues 809-847, 849-888, and 890-926; these read EINE…QFCH, RYNL…KNCE, and DVKD…SLCE. The EGF-like 14; calcium-binding domain occupies 928–964; sequence EINECSSEPCKNNGTCVDLTNRFFCNCEPEYHGPFCE. Residues 966 to 1002 form the EGF-like 15 domain; sequence DVNKCKISPCLDEENCVYRTDGYNCLCAPGYTGINCE. Positions 1004-1040 constitute an EGF-like 16; calcium-binding domain; the sequence is NLDECLSEPCLHDGVCIDGINHYTCDCKSGFFGTHCE. 3 consecutive EGF-like domains span residues 1042–1077, 1079–1115, and 1117–1159; these read NAND…TQCK, KIND…AYCE, and SIDN…QFCE. The region spanning 1161-1197 is the EGF-like 20; calcium-binding domain; it reads NINECSSSPCLHGADCEDHINGYVCKCQPGWSGHHCE. The Laminin G-like 1 domain maps to 1883 to 2063; that stretch reads FSCVRYYGDS…AVKNYHINNC (181 aa). Positions 2099–2140 constitute an EGF-like 21 domain; that stretch reads APSVCQQDVCHNGGTCHAIFLSSGIVSFQCDCPLHFTGRFCE. The Laminin G-like 2 domain maps to 2145 to 2339; that stretch reads LFFPSFNGNS…NIENCHVPWC (195 aa). Asn2170 carries N-linked (GlcNAc...) asparagine glycosylation. 2 EGF-like domains span residues 2335–2368 and 2371–2408; these read HVPW…YSGK and QFAS…PLCT. Disulfide bonds link Cys2339/Cys2350, Cys2344/Cys2359, Cys2375/Cys2386, Cys2380/Cys2396, Cys2398/Cys2407, Cys2576/Cys2609, Cys2614/Cys2625, Cys2619/Cys2634, Cys2636/Cys2645, Cys2652/Cys2668, Cys2662/Cys2677, Cys2679/Cys2688, Cys2868/Cys2895, Cys2900/Cys2911, Cys2905/Cys2920, Cys2922/Cys2931, Cys2937/Cys2948, Cys2942/Cys2958, and Cys2960/Cys2969. One can recognise a Laminin G-like 3 domain in the interval 2419–2609; the sequence is SGTDAFGYTS…PNAGRSVGQC (191 aa). 2 EGF-like domains span residues 2610–2646 and 2648–2689; these read HASP…SFCT and TVST…IYCE. The region spanning 2717–2895 is the Laminin G-like 4 domain; sequence DPSFRSNELS…AKGGSNVGDC (179 aa). EGF-like domains are found at residues 2896 to 2932 and 2933 to 2970; these read DGTA…NTCN and QSVS…RYCE. Residues 2975-3165 form the Laminin G-like 5 domain; the sequence is FSTAKFMGNS…YDGDEQNEVT (191 aa).

This sequence belongs to the EYS family. In terms of tissue distribution, expressed in retina (at protein level). Isoform 1: Detected in retina. Isoform 2: Detected in retina. Isoform 3: Strongly expressed in retina and testis. Isoform 4: Strongly expressed in testis, and weakly expressed in retina.

The protein resides in the cell projection. Its subcellular location is the cilium. It localises to the photoreceptor outer segment. The protein localises to the cytoplasm. It is found in the cytoskeleton. The protein resides in the cilium axoneme. Its subcellular location is the microtubule organizing center. It localises to the centrosome. The protein localises to the secreted. It is found in the extracellular space. The protein resides in the extracellular matrix. Its subcellular location is the interphotoreceptor matrix. In terms of biological role, required to maintain the integrity of photoreceptor cells. Specifically required for normal morphology of the photoreceptor ciliary pocket, and might thus facilitate protein trafficking between the photoreceptor inner and outer segments via the transition zone. In Homo sapiens (Human), this protein is Protein eyes shut homolog (EYS).